The following is a 49-amino-acid chain: MTRSLKKNPFVAKHLLRKIEKLNTKAEKQIIITWSRAITGERRELNPRW.

The protein belongs to the universal ribosomal protein uS19 family.

It localises to the plastid. The protein resides in the chloroplast. Its function is as follows. Protein S19 forms a complex with S13 that binds strongly to the 16S ribosomal RNA. The chain is Small ribosomal subunit protein uS19c (rps19) from Sinapis alba (White mustard).